Here is a 634-residue protein sequence, read N- to C-terminus: MDCEGTEDEGAGCNGWFFVEAIVEKKTGDNVSDDEDENADDTGSDLINFIDSETSICSQAEQETARALFQAQELQANKEAVHQLKRKFLVSPRSSPLGDITNQNNTHSHSQANESQVKRRLLDSYPDSGYGNTQVETVEATLQVDGQHGGSQNSVCSSGGGSVMDVETTESCANVELNSICEVLKSSNAKATLMAKFKELYGISYNELVRVFKSDKTCCIDWVCALFGVSPMVAENLKTLIKPFCMYYHIQCLSCDWGTIVLMLIRFSCAKNRTTIAKCLSTLVNIPQSQMFIEPPKLRSTPVALYFYRTGISNISNTYGETPEWITRQTQLQHSFEDSTFELSQMVQWAFDHEVLDDSEIAFHYAQLADIDSNAAAFLKSNCQAKYVKDCGTMARHYKRAQRKSLSMSAWIRYRCDRAKDGGNWREIAKFLRYQGVNFMSFIQMFKQFLKGTPKHNCIVIYGPPNTGKSLFAMSLMKFMQGSIISYVNSGSHFWLQPLEDAKIALLDDATYGCWTYIDQYLRNFLDGNPCSIDRKHRSLIQLVCPPLLITSNINPQEDANLMYLHTRVTVLKFLNTFPFDNNGNAVYTLNDENWKNFFSTTWSRLDLEEEEDKENGDPMPPFKCVPGENTRLL.

Residues 85 to 87 (KRK) carry the Nuclear localization signal motif. Residues S91 and S95 each carry the phosphoserine; by host modification. A disordered region spans residues 92-117 (PRSSPLGDITNQNNTHSHSQANESQV). Residues 100–115 (ITNQNNTHSHSQANES) are compositionally biased toward polar residues. Residues 172–338 (CANVELNSIC…QTQLQHSFED (167 aa)) form a DNA-binding region region. The SF3 helicase domain occupies 437–587 (VNFMSFIQMF…FPFDNNGNAV (151 aa)). 463-470 (GPPNTGKS) provides a ligand contact to ATP.

This sequence belongs to the papillomaviridae E1 protein family. In terms of assembly, can form hexamers. Interacts with E2 protein; this interaction increases E1 DNA binding specificity. Interacts with host DNA polymerase subunit POLA2. Interacts with host single stranded DNA-binding protein RPA1. Interacts with host TOP1; this interaction stimulates the enzymatic activity of TOP1. In terms of processing, phosphorylated.

The protein localises to the host nucleus. It catalyses the reaction Couples ATP hydrolysis with the unwinding of duplex DNA by translocating in the 3'-5' direction.. The enzyme catalyses ATP + H2O = ADP + phosphate + H(+). ATP-dependent DNA 3'-5' helicase required for initiation of viral DNA replication. It forms a complex with the viral E2 protein. The E1-E2 complex binds to the replication origin which contains binding sites for both proteins. During the initial step, a dimer of E1 interacts with a dimer of protein E2 leading to a complex that binds the viral origin of replication with high specificity. Then, a second dimer of E1 displaces the E2 dimer in an ATP-dependent manner to form the E1 tetramer. Following this, two E1 monomers are added to each half of the site, which results in the formation of two E1 trimers on the viral ori. Subsequently, two hexamers will be created. The double hexamer acts as a bi-directional helicase machinery and unwinds the viral DNA and then recruits the host DNA polymerase to start replication. This chain is Replication protein E1, found in Homo sapiens (Human).